The chain runs to 411 residues: Epoxyqueuosine reductase (411 aa).

Aspartate 171 functions as the Proton donor in the catalytic mechanism. The region spanning leucine 213 to threonine 245 is the 4Fe-4S ferredoxin-type domain. [4Fe-4S] cluster is bound by residues cysteine 225, cysteine 228, cysteine 231, cysteine 235, cysteine 251, cysteine 278, cysteine 281, and cysteine 285.

It belongs to the QueG family. In terms of assembly, monomer. Cob(II)alamin serves as cofactor. [4Fe-4S] cluster is required as a cofactor.

The protein resides in the cytoplasm. The catalysed reaction is epoxyqueuosine(34) in tRNA + AH2 = queuosine(34) in tRNA + A + H2O. Its pathway is tRNA modification; tRNA-queuosine biosynthesis. Functionally, catalyzes the conversion of epoxyqueuosine (oQ) to queuosine (Q), which is a hypermodified base found in the wobble positions of tRNA(Asp), tRNA(Asn), tRNA(His) and tRNA(Tyr). The polypeptide is Epoxyqueuosine reductase (Yersinia pestis).